The chain runs to 80 residues: MKLTCVLIIAMLFLIVCQLNTADDSTDKQEYRAVKLRDAMRNFKGSKRNCGEQGEGCATRPCCAGLSCVGSRPGGLCQYD.

Residues methionine 1 to threonine 21 form the signal peptide. The propeptide occupies alanine 22 to arginine 48. Intrachain disulfides connect cysteine 50-cysteine 63, cysteine 57-cysteine 68, and cysteine 62-cysteine 77.

The protein belongs to the conotoxin O1 superfamily. Expressed by the venom duct.

The protein resides in the secreted. The chain is Conotoxin ArMKLT2-0321 from Conus arenatus (Sand-dusted cone).